The following is a 439-amino-acid chain: 3-phosphoshikimate 1-carboxyvinyltransferase (439 aa).

3-phosphoshikimate is bound by residues Lys29, Ser30, and Arg34. Residue Lys29 participates in phosphoenolpyruvate binding. Phosphoenolpyruvate-binding residues include Gly100 and Arg128. 3-phosphoshikimate contacts are provided by Ser173, Ser174, Gln175, Ser201, Asp321, and Lys348. Residue Gln175 coordinates phosphoenolpyruvate. Asp321 acts as the Proton acceptor in catalysis. Residues Arg352 and Arg395 each contribute to the phosphoenolpyruvate site.

It belongs to the EPSP synthase family. As to quaternary structure, monomer.

Its subcellular location is the cytoplasm. It carries out the reaction 3-phosphoshikimate + phosphoenolpyruvate = 5-O-(1-carboxyvinyl)-3-phosphoshikimate + phosphate. It participates in metabolic intermediate biosynthesis; chorismate biosynthesis. Its function is as follows. Catalyzes the transfer of the enolpyruvyl moiety of phosphoenolpyruvate (PEP) to the 5-hydroxyl of shikimate-3-phosphate (S3P) to produce enolpyruvyl shikimate-3-phosphate and inorganic phosphate. The sequence is that of 3-phosphoshikimate 1-carboxyvinyltransferase from Halobacterium salinarum (strain ATCC 700922 / JCM 11081 / NRC-1) (Halobacterium halobium).